We begin with the raw amino-acid sequence, 514 residues long: Major facilitator superfamily domain-containing protein 4A (514 aa).

5 helical membrane-spanning segments follow: residues 19–39 (LTYW…GPTL), 53–73 (ISWV…LGGV), 82–102 (LWAL…IPFC), 107–127 (VLAL…TVAN), and 139–159 (AVFL…SPLI). Asn177 and Asn203 each carry an N-linked (GlcNAc...) asparagine glycan. A run of 7 helical transmembrane segments spans residues 221-241 (YAFW…LMLL), 307-327 (FFAI…LTGA), 347-367 (VAGY…LLSI), 376-396 (ATMV…LLIF), 400-420 (VVFL…TFPS), 438-458 (VLVT…GSIF), and 466-486 (FLVC…LLLF).

Belongs to the major facilitator superfamily.

It localises to the membrane. In Pongo abelii (Sumatran orangutan), this protein is Major facilitator superfamily domain-containing protein 4A (MFSD4A).